The following is a 210-amino-acid chain: 3-phospho-D-glycerate guanylyltransferase (210 aa).

Belongs to the CofC family.

The catalysed reaction is (2R)-3-phosphoglycerate + GTP + H(+) = 3-[(R)-glyceryl]-diphospho-5'-guanosine + diphosphate. The protein operates within cofactor biosynthesis; coenzyme F420 biosynthesis. Its function is as follows. Guanylyltransferase that catalyzes the activation of (2R)-3-phosphoglycerate (3PG) as 3-[(R)-glyceryl]-diphospho-5'-guanosine, via the condensation of 3PG with GTP. It is involved in the biosynthesis of a derivative of the hydride carrier cofactor coenzyme F420, 3PG-F420. In Colwellia psychrerythraea (strain 34H / ATCC BAA-681) (Vibrio psychroerythus), this protein is 3-phospho-D-glycerate guanylyltransferase.